The primary structure comprises 80 residues: Conotoxin VnMSGL-0123 (80 aa).

An N-terminal signal peptide occupies residues 1–20 (MSGLGIMVLTLLLLVSMATS). A propeptide spanning residues 21-44 (HQDGGGKQATQRDAINVRRRRSIT) is cleaved from the precursor. 3 disulfides stabilise this stretch: Cys-53-Cys-65, Cys-57-Cys-74, and Cys-64-Cys-78. Phe-79 is subject to Phenylalanine amide.

The protein belongs to the conotoxin O3 superfamily. In terms of tissue distribution, expressed by the venom duct.

Its subcellular location is the secreted. The chain is Conotoxin VnMSGL-0123 from Conus ventricosus (Mediterranean cone).